The chain runs to 102 residues: Caroteno-chlorophyll a-c-binding protein (102 aa).

Residues Glu-36 and His-39 each contribute to the chlorophyll a site. A helical membrane pass occupies residues Val-78–Ala-98.

The protein belongs to the light-harvesting chlorophyll a/b-binding (LHC) protein family. The LHC complex consists of chlorophyll a-b binding proteins. It depends on Binds at least 14 chlorophylls (8 Chl-a and 6 Chl-b) and carotenoids such as lutein and neoxanthin. as a cofactor. Post-translationally, photoregulated by reversible phosphorylation of its threonine residues.

Its subcellular location is the plastid. The protein resides in the chloroplast thylakoid membrane. Its function is as follows. The light-harvesting complex (LHC) functions as a light receptor, it captures and delivers excitation energy to photosystems with which it is closely associated. The sequence is that of Caroteno-chlorophyll a-c-binding protein from Amphidinium carterae (Dinoflagellate).